The chain runs to 930 residues: MDFTHFDDFAFAYYGLPDQASLASLVDHTHMFQSPTAFPQHQAMSGLAHSGLPLGTLPTGNRSQSMEGSKAPPDRTSPASNALEDPTTDEFGLASRNRVGGIDLGGKPKEDKADATPAWSGLKTKAGKERKRLPLACIPCRRKKIRCSGEKPACEHCLRSYIPCVYKITTRKAAPRTDYMAMLDKRPKCMEERVIKAIPKSDQEVASSVTRPVVKPAIPGTVPSSKPTKKRSAEEAFGPDLEACAKAPSEPKIEGDNGPSNLQVQEGEENKLQHEGTEALPSKDIQEHLADVFFDNIYGQSYHLLHKPSYMRKLKNGTLPPVLVLTVCAVAARFTSNPLVSSSGPEFLRGEEWASHARDICTKRYEWPNLTILTCLLILGLHEFGTCQGGRSWALGGQAIRMAFALQLHKDLEYDPSGRNGTKTQLSFIDREIRRRIMWACFLMDRFNSSGTDRPMFIREDTIQIPLPVKEKYFQFGMPAPTEMLDGRVPHPPSPNDGQIADVRENMGVAAFLIRAIALWGRITTCLSQGCKDLDSNPLWEGKSHYMNHLNDAVNLEASLPLSLKYSAENLEVHKTENTPSQFLFMHICLQHNILLVSRAAMSARKQHGVHDDFFSEASKRTFNAANRISELLREAEQSGCFVSAPFAGYCAFSSTTVHILAIISRNPSMKLTAEANLTTNVKYLHKMKKYWGMFHWMVENVRTQYRNVLDAMRAGANVEERATQLSFLQYGDWFNRYPRGLSDAEFMDPATHKRKDSGADGVLDAKPELRSVEKYFTLPTPRRVENKDTIRAAAPKRKQSAKKQTGMPAQPGQHLDSLQSIDADAVSQEHKFSGGLGLQITGAAGFNPLAASNQQNPDFSTTMSPTSPANMTAFAHYAHTPTFFPPELLAMNFGQDSNGNIDPLDRQLIYGGYSMDASTGLGHGHTWSL.

The zn(2)-C6 fungal-type DNA-binding region spans 137-164 (CIPCRRKKIRCSGEKPACEHCLRSYIPC).

It localises to the nucleus. Its function is as follows. Zn(2)-C6 fungal-type transcription factor that has a role in the establishment of the fungus within the plant and/or the progress of the disease. Regulates the expression of virulence factors such as SIX1 and SIX6. The polypeptide is Zn(2)-C6 fungal-type transcription factor FTF1c (Fusarium oxysporum f. sp. lycopersici (strain 4287 / CBS 123668 / FGSC 9935 / NRRL 34936) (Fusarium vascular wilt of tomato)).